A 244-amino-acid polypeptide reads, in one-letter code: Protein FAM168A (244 aa).

Methionine 1 carries the N-acetylmethionine modification. Position 102 is an asymmetric dimethylarginine (arginine 102). A disordered region spans residues 107–126; that stretch reads TPYKVPPTQSNTAPPPYSPS.

Belongs to the FAM168 family. As to quaternary structure, interacts with POLB. Interacts with AKT1 and MT1X. May interact with FAM168B.

In terms of biological role, in cancer context, protects cells from induced-DNA damage and apoptosis. Acts, at least in part, through PI3K/AKT/NFKB signaling pathway and by preventing POLB degradation. Decreases POLB ubiquitation and stabilizes its protein levels. The chain is Protein FAM168A (Fam168a) from Mus musculus (Mouse).